Here is a 189-residue protein sequence, read N- to C-terminus: Apolipophorin-3 (189 aa).

An N-terminal signal peptide occupies residues methionine 1–serine 18. Residues alanine 19–arginine 23 constitute a propeptide that is removed on maturation.

This sequence belongs to the insect apolipophorin-3 family. As to quaternary structure, equilibrium between a soluble monomer and a bound lipoprotein form. Apolipophorin-3 associates with lipophorin during lipid loading until each particle contains 9 or 14 molecules of apolipophorin-3. As to expression, hemolymph.

Its subcellular location is the secreted. Assists in the loading of diacylglycerol, generated from triacylglycerol stores in the fat body through the action of adipokinetic hormone, into lipophorin, the hemolymph lipoprotein. It increases the lipid carrying capacity of lipophorin by covering the expanding hydrophobic surface resulting from diacylglycerol uptake. It thus plays a critical role in the transport of lipids during flight in several species of insects. This chain is Apolipophorin-3, found in Manduca sexta (Tobacco hawkmoth).